The chain runs to 252 residues: 5'-nucleotidase SurE (252 aa).

4 residues coordinate a divalent metal cation: aspartate 8, aspartate 9, serine 39, and asparagine 91.

This sequence belongs to the SurE nucleotidase family. A divalent metal cation serves as cofactor.

The protein localises to the cytoplasm. The enzyme catalyses a ribonucleoside 5'-phosphate + H2O = a ribonucleoside + phosphate. Nucleotidase that shows phosphatase activity on nucleoside 5'-monophosphates. This is 5'-nucleotidase SurE from Bordetella pertussis (strain Tohama I / ATCC BAA-589 / NCTC 13251).